A 487-amino-acid polypeptide reads, in one-letter code: N-succinylglutamate 5-semialdehyde dehydrogenase (487 aa).

Position 221 to 226 (221 to 226 (GSSDTG)) interacts with NAD(+). Catalysis depends on residues Glu-244 and Cys-278.

Belongs to the aldehyde dehydrogenase family. AstD subfamily.

It carries out the reaction N-succinyl-L-glutamate 5-semialdehyde + NAD(+) + H2O = N-succinyl-L-glutamate + NADH + 2 H(+). It participates in amino-acid degradation; L-arginine degradation via AST pathway; L-glutamate and succinate from L-arginine: step 4/5. Functionally, catalyzes the NAD-dependent reduction of succinylglutamate semialdehyde into succinylglutamate. In Burkholderia orbicola (strain MC0-3), this protein is N-succinylglutamate 5-semialdehyde dehydrogenase.